The sequence spans 160 residues: Cyclic pyranopterin monophosphate synthase (160 aa).

Residues 74–76 (LSH) and 112–113 (ME) contribute to the substrate site. Asp127 is an active-site residue.

It belongs to the MoaC family. As to quaternary structure, homohexamer; trimer of dimers.

It catalyses the reaction (8S)-3',8-cyclo-7,8-dihydroguanosine 5'-triphosphate = cyclic pyranopterin phosphate + diphosphate. It functions in the pathway cofactor biosynthesis; molybdopterin biosynthesis. Catalyzes the conversion of (8S)-3',8-cyclo-7,8-dihydroguanosine 5'-triphosphate to cyclic pyranopterin monophosphate (cPMP). The sequence is that of Cyclic pyranopterin monophosphate synthase from Pelobacter propionicus (strain DSM 2379 / NBRC 103807 / OttBd1).